The sequence spans 255 residues: Chlorocatechol 1,2-dioxygenase (255 aa).

Positions 130, 164, 188, and 190 each coordinate Fe cation.

This sequence belongs to the intradiol ring-cleavage dioxygenase family. Requires Fe(3+) as cofactor.

The catalysed reaction is 3,5-dichlorocatechol + O2 = (2E,4E)-2,4-dichloromuconate + 2 H(+). It functions in the pathway aromatic compound metabolism; 3-chlorocatechol degradation. Functionally, preferentially converts 3,5-dichlorocatechol as opposed to other chlorinated catechols. Retains diminished activity toward non-chlorinated substrates. The sequence is that of Chlorocatechol 1,2-dioxygenase (tfdC) from Burkholderia cepacia (Pseudomonas cepacia).